Consider the following 589-residue polypeptide: uncharacterized protein (589 aa).

Helical transmembrane passes span 11–31 (LNWI…TMLA), 57–77 (LILM…FSVL), 97–117 (FWFF…HAIA), 190–210 (IEFT…GFNI), and 213–233 (GVVF…VWIG). The ABC transmembrane type-1 domain occupies 57–357 (LILMLLVLFI…FRLFYEQFTL (301 aa)). The ABC transporter domain maps to 390–587 (VALKNFGIKD…QLKLDVCLLC (198 aa)). 423-430 (GASGTGKT) contributes to the ATP binding site.

It belongs to the ABC transporter superfamily.

It localises to the cell inner membrane. This is an uncharacterized protein from Haemophilus influenzae (strain ATCC 51907 / DSM 11121 / KW20 / Rd).